The chain runs to 247 residues: UPF0309 protein LMOf2365_2617 (247 aa).

Positions 31-214 constitute an SIS domain; the sequence is VAESIENDGV…ETMVNDNFTP (184 aa).

The protein belongs to the UPF0309 family.

This is UPF0309 protein LMOf2365_2617 from Listeria monocytogenes serotype 4b (strain F2365).